Here is a 549-residue protein sequence, read N- to C-terminus: Alanine aminotransferase 2-like (549 aa).

Lysine 367 carries the post-translational modification N6-(pyridoxal phosphate)lysine.

It belongs to the class-I pyridoxal-phosphate-dependent aminotransferase family. Alanine aminotransferase subfamily. Homodimer. Pyridoxal 5'-phosphate serves as cofactor.

It catalyses the reaction L-alanine + 2-oxoglutarate = pyruvate + L-glutamate. It functions in the pathway amino-acid degradation; L-alanine degradation via transaminase pathway; pyruvate from L-alanine: step 1/1. Functionally, catalyzes the reversible transamination between alanine and 2-oxoglutarate to form pyruvate and glutamate. The sequence is that of Alanine aminotransferase 2-like (gpt2l) from Danio rerio (Zebrafish).